Here is a 159-residue protein sequence, read N- to C-terminus: NAD(P)H-quinone oxidoreductase subunit J, chloroplastic (159 aa).

The protein belongs to the complex I 30 kDa subunit family. In terms of assembly, NDH is composed of at least 16 different subunits, 5 of which are encoded in the nucleus.

It localises to the plastid. Its subcellular location is the chloroplast thylakoid membrane. It carries out the reaction a plastoquinone + NADH + (n+1) H(+)(in) = a plastoquinol + NAD(+) + n H(+)(out). The catalysed reaction is a plastoquinone + NADPH + (n+1) H(+)(in) = a plastoquinol + NADP(+) + n H(+)(out). Functionally, NDH shuttles electrons from NAD(P)H:plastoquinone, via FMN and iron-sulfur (Fe-S) centers, to quinones in the photosynthetic chain and possibly in a chloroplast respiratory chain. The immediate electron acceptor for the enzyme in this species is believed to be plastoquinone. Couples the redox reaction to proton translocation, and thus conserves the redox energy in a proton gradient. This Brachypodium distachyon (Purple false brome) protein is NAD(P)H-quinone oxidoreductase subunit J, chloroplastic.